The following is a 296-amino-acid chain: Bifunctional protein FolD (296 aa).

Residues 166–168 (GRS), Ser191, and Ile232 each bind NADP(+).

It belongs to the tetrahydrofolate dehydrogenase/cyclohydrolase family. In terms of assembly, homodimer.

It carries out the reaction (6R)-5,10-methylene-5,6,7,8-tetrahydrofolate + NADP(+) = (6R)-5,10-methenyltetrahydrofolate + NADPH. It catalyses the reaction (6R)-5,10-methenyltetrahydrofolate + H2O = (6R)-10-formyltetrahydrofolate + H(+). The protein operates within one-carbon metabolism; tetrahydrofolate interconversion. Its function is as follows. Catalyzes the oxidation of 5,10-methylenetetrahydrofolate to 5,10-methenyltetrahydrofolate and then the hydrolysis of 5,10-methenyltetrahydrofolate to 10-formyltetrahydrofolate. This is Bifunctional protein FolD from Cereibacter sphaeroides (strain ATCC 17029 / ATH 2.4.9) (Rhodobacter sphaeroides).